We begin with the raw amino-acid sequence, 423 residues long: MDSRVALVRKYIAPSVIKSDSIQLHGLVKAPLFKALNSRYKLGSLQIVQDVDWNAKTTPSDSPEPLAATLNSNRSLPMTKFPKQEILEQVKLDTKVGKWRKFMTGWFRIGLYLLKSYKTGIQNTLKVFWDTRNEEQKFSIKNGALANLVREIEMHEINTRLSSSSLPTSSSAKAPLRPLSINRKTLVELIRRDQIWKLPVFFTLVFIFEEVSVLIFTFFPRVCPYNCLTPGGYKKLSNSYIKGTTSTQGNYGLGPLEFTKQGTIKYEPPYAVPIENLYNFLTSFPQSMISNWKLYIYKKLKLQKLLCNEIEKIYQYLFIDDWLLLQSILNTDVEKTKIALSDRELVNCILERKLYHMGDDLNEMVNDTLGKEILLKRLFLYWTLRYNDTISLNGKHTFSEKWGVNNISLLKYNSELVATKDIQ.

A helical transmembrane segment spans residues P199–F219.

As to quaternary structure, interacts with COX18. This interaction may be essential for its insertion into mitochondrial inner membrane.

Its subcellular location is the mitochondrion inner membrane. In terms of biological role, probably involved in mitochondrial export. Confers resistance to the anti-pneumocystis carinii drug pentamidine. May act by the removal of pentamidine, or its damage targets, from the matrix by an active-transport mechanism. This is Pentamidine resistance factor, mitochondrial (PNT1) from Saccharomyces cerevisiae (strain ATCC 204508 / S288c) (Baker's yeast).